A 138-amino-acid chain; its full sequence is Holo-[acyl-carrier-protein] synthase (138 aa).

The Mg(2+) site is built by Asp11 and Glu65.

Belongs to the P-Pant transferase superfamily. AcpS family. The cofactor is Mg(2+).

The protein resides in the cytoplasm. The catalysed reaction is apo-[ACP] + CoA = holo-[ACP] + adenosine 3',5'-bisphosphate + H(+). In terms of biological role, transfers the 4'-phosphopantetheine moiety from coenzyme A to a Ser of acyl-carrier-protein. This Ralstonia nicotianae (strain ATCC BAA-1114 / GMI1000) (Ralstonia solanacearum) protein is Holo-[acyl-carrier-protein] synthase.